A 515-amino-acid chain; its full sequence is Sterol 14-alpha demethylase cyp51A (515 aa).

A helical transmembrane segment spans residues Leu-7 to Phe-29. Residues Asn-33 and Asn-269 are each glycosylated (N-linked (GlcNAc...) asparagine). Residue Cys-454 coordinates heme. Residue Asn-512 is glycosylated (N-linked (GlcNAc...) asparagine).

The protein belongs to the cytochrome P450 family. Heme serves as cofactor.

The protein resides in the endoplasmic reticulum membrane. The enzyme catalyses a 14alpha-methyl steroid + 3 reduced [NADPH--hemoprotein reductase] + 3 O2 = a Delta(14) steroid + formate + 3 oxidized [NADPH--hemoprotein reductase] + 4 H2O + 4 H(+). The catalysed reaction is a 14alpha-methyl steroid + reduced [NADPH--hemoprotein reductase] + O2 = a 14alpha-hydroxymethyl steroid + oxidized [NADPH--hemoprotein reductase] + H2O + H(+). It carries out the reaction a 14alpha-hydroxymethyl steroid + reduced [NADPH--hemoprotein reductase] + O2 = a 14alpha-formyl steroid + oxidized [NADPH--hemoprotein reductase] + 2 H2O + H(+). It catalyses the reaction a 14alpha-formyl steroid + reduced [NADPH--hemoprotein reductase] + O2 = a Delta(14) steroid + formate + oxidized [NADPH--hemoprotein reductase] + H2O + 2 H(+). The enzyme catalyses lanosterol + 3 reduced [NADPH--hemoprotein reductase] + 3 O2 = 4,4-dimethyl-5alpha-cholesta-8,14,24-trien-3beta-ol + formate + 3 oxidized [NADPH--hemoprotein reductase] + 4 H2O + 4 H(+). The catalysed reaction is lanosterol + reduced [NADPH--hemoprotein reductase] + O2 = 32-hydroxylanosterol + oxidized [NADPH--hemoprotein reductase] + H2O + H(+). It carries out the reaction 32-hydroxylanosterol + reduced [NADPH--hemoprotein reductase] + O2 = 32-oxolanosterol + oxidized [NADPH--hemoprotein reductase] + 2 H2O + H(+). It catalyses the reaction 32-oxolanosterol + reduced [NADPH--hemoprotein reductase] + O2 = 4,4-dimethyl-5alpha-cholesta-8,14,24-trien-3beta-ol + formate + oxidized [NADPH--hemoprotein reductase] + H2O + 2 H(+). The enzyme catalyses eburicol + 3 reduced [NADPH--hemoprotein reductase] + 3 O2 = 14-demethyleburicol + formate + 3 oxidized [NADPH--hemoprotein reductase] + 4 H2O + 4 H(+). The catalysed reaction is eburicol + reduced [NADPH--hemoprotein reductase] + O2 = 32-hydroxyeburicol + oxidized [NADPH--hemoprotein reductase] + H2O + H(+). It carries out the reaction 32-hydroxyeburicol + reduced [NADPH--hemoprotein reductase] + O2 = 32-oxoeburicol + oxidized [NADPH--hemoprotein reductase] + 2 H2O + H(+). It catalyses the reaction 32-oxoeburicol + reduced [NADPH--hemoprotein reductase] + O2 = 14-demethyleburicol + formate + oxidized [NADPH--hemoprotein reductase] + H2O + 2 H(+). It functions in the pathway steroid metabolism; ergosterol biosynthesis. The sterol 14-alpha demethylase activity is inhibited by azole compounds. Activity is inhibited by the novel and long-acting fungicidal azole, PC1244. In terms of biological role, sterol 14alpha-demethylase, encoded by cyp51A and cyp51B, that plays a critical role in the third module of ergosterol biosynthesis pathway, being ergosterol the major sterol component in fungal membranes that participates in a variety of functions. The third module or late pathway involves the ergosterol synthesis itself through consecutive reactions that mainly occur in the endoplasmic reticulum (ER) membrane. In filamentous fungi, during the initial step of this module, lanosterol (lanosta-8,24-dien-3beta-ol) can be metabolized to eburicol. Sterol 14alpha-demethylase catalyzes the three-step oxidative removal of the 14alpha-methyl group (C-32) of both these sterols in the form of formate, and converts eburicol and lanosterol to 14-demethyleburicol (4,4,24-trimethylergosta-8,14,24(28)-trienol) and 4,4-dimethyl-5alpha-cholesta-8,14,24-trien-3beta-ol, respectively, which are further metabolized by other enzymes in the pathway to ergosterol. Can also use substrates not intrinsic to fungi, such as 24,25-dihydrolanosterol (DHL), producing 4,4'-dimethyl-8,14-cholestadien-3-beta-ol, but at lower rates than the endogenous substrates. Functionally, as a target of azole drugs, plays a crucial role in azole susceptibility. The sequence is that of Sterol 14-alpha demethylase cyp51A from Aspergillus fumigatus (strain ATCC MYA-4609 / CBS 101355 / FGSC A1100 / Af293) (Neosartorya fumigata).